Reading from the N-terminus, the 50-residue chain is Putative protein HokF (50 aa).

The helical transmembrane segment at 5 to 25 (YALVAVIVLCLTVPGFTLLVG) threads the bilayer.

Belongs to the Hok/Gef family.

Its subcellular location is the cell inner membrane. Toxic component of a type I toxin-antitoxin (TA) system. When overexpressed kills cells within minutes; causes collapse of the transmembrane potential and arrest of respiration. Its toxic effect is probably neutralized by an antisense antitoxin Sok RNA. The protein is Putative protein HokF (hokF) of Escherichia coli O157:H7.